Reading from the N-terminus, the 1147-residue chain is Nucleolar protein 6 (1147 aa).

The segment at 1–49 is disordered; it reads MQKKRSRAGAAEQEAASDDGEMSDSSDKMEVSQNKGKSGIKRAPEADDV. Over residues 15 to 24 the composition is skewed to acidic residues; that stretch reads AASDDGEMSD.

Belongs to the NRAP family. As to quaternary structure, part of the small subunit (SSU) processome, composed of more than 70 proteins and the RNA chaperone small nucleolar RNA (snoRNA) U3.

The protein resides in the nucleus. It is found in the nucleolus. It localises to the chromosome. Functionally, part of the small subunit (SSU) processome, first precursor of the small eukaryotic ribosomal subunit. During the assembly of the SSU processome in the nucleolus, many ribosome biogenesis factors, an RNA chaperone and ribosomal proteins associate with the nascent pre-rRNA and work in concert to generate RNA folding, modifications, rearrangements and cleavage as well as targeted degradation of pre-ribosomal RNA by the RNA exosome. The chain is Nucleolar protein 6 (nol6) from Xenopus laevis (African clawed frog).